The chain runs to 300 residues: Ornithine carbamoyltransferase (300 aa).

Residues 51-54 (STRT), Gln-78, Arg-102, and 129-132 (HPCQ) contribute to the carbamoyl phosphate site. Residues Asn-160, Asp-217, and 221-222 (SM) each bind L-ornithine. Residues 257–258 (CL) and Arg-285 each bind carbamoyl phosphate.

The protein belongs to the aspartate/ornithine carbamoyltransferase superfamily. OTCase family.

Its subcellular location is the cytoplasm. The catalysed reaction is carbamoyl phosphate + L-ornithine = L-citrulline + phosphate + H(+). It functions in the pathway amino-acid biosynthesis; L-arginine biosynthesis; L-arginine from L-ornithine and carbamoyl phosphate: step 1/3. In terms of biological role, reversibly catalyzes the transfer of the carbamoyl group from carbamoyl phosphate (CP) to the N(epsilon) atom of ornithine (ORN) to produce L-citrulline. This Halorhodospira halophila (strain DSM 244 / SL1) (Ectothiorhodospira halophila (strain DSM 244 / SL1)) protein is Ornithine carbamoyltransferase.